The chain runs to 89 residues: Transcriptional regulator WhiB2 (89 aa).

Pro residues predominate over residues 1-15 (MVPEAPAPFEEPLPP). Positions 1–24 (MVPEAPAPFEEPLPPEATDQWQDR) are disordered. The 4Fe-4S Wbl-type domain maps to 26–83 (LCAQTDPEAFFPEKGGSTREAKKICMGCEVRHECLEYALAHDERFGIWGGLSERERRR). Position 27 (cysteine 27) interacts with [4Fe-4S] cluster. The residue at position 42 (serine 42) is a Phosphoserine. [4Fe-4S] cluster contacts are provided by cysteine 50, cysteine 53, and cysteine 59.

This sequence belongs to the WhiB family. [4Fe-4S] cluster serves as cofactor. Post-translationally, may be phosphorylated, possibly on Ser-42. In terms of processing, the cluster is degraded quickly in the presence of air. Upon cluster removal intramolecular disulfide bonds are formed. The Fe-S cluster can be nitrosylated by nitric oxide (NO).

Its subcellular location is the cytoplasm. Functionally, acts as a transcriptional regulator. Probably redox-responsive. The apo- but not holo-form probably binds DNA. Its function is as follows. The apo-form functions as a chaperone, preventing aggregation or helping in correct refolding of a number of substrates; this activity does not require ATP or the ability to bind a Fe-S cluster. Chaperone activity is insensitive to the redox state of its cysteine residues. The apo-form has no protein disulfide reductase activity. The apo-form binds to its own promoter. The polypeptide is Transcriptional regulator WhiB2 (whiB2) (Mycobacterium tuberculosis (strain ATCC 25618 / H37Rv)).